Here is a 502-residue protein sequence, read N- to C-terminus: Probable glycine dehydrogenase (decarboxylating) subunit 2 (502 aa).

K273 is modified (N6-(pyridoxal phosphate)lysine).

Belongs to the GcvP family. C-terminal subunit subfamily. The glycine cleavage system is composed of four proteins: P, T, L and H. In this organism, the P 'protein' is a heterodimer of two subunits. It depends on pyridoxal 5'-phosphate as a cofactor.

The catalysed reaction is N(6)-[(R)-lipoyl]-L-lysyl-[glycine-cleavage complex H protein] + glycine + H(+) = N(6)-[(R)-S(8)-aminomethyldihydrolipoyl]-L-lysyl-[glycine-cleavage complex H protein] + CO2. Its function is as follows. The glycine cleavage system catalyzes the degradation of glycine. The P protein binds the alpha-amino group of glycine through its pyridoxal phosphate cofactor; CO(2) is released and the remaining methylamine moiety is then transferred to the lipoamide cofactor of the H protein. The protein is Probable glycine dehydrogenase (decarboxylating) subunit 2 of Pyrococcus abyssi (strain GE5 / Orsay).